Here is a 289-residue protein sequence, read N- to C-terminus: Delta-sarcoglycan (289 aa).

Residues 1–35 (MPQEQYTHHRSTMPGSVGPQVYKVGIYGWRKRCLY) lie on the Cytoplasmic side of the membrane. A helical; Signal-anchor for type II membrane protein transmembrane segment spans residues 36 to 56 (FFVLLLMILILVNLAMTIWIL). At 57–289 (KVMNFTIDGM…TCQINTSVCL (233 aa)) the chain is on the extracellular side. N-linked (GlcNAc...) asparagine glycans are attached at residues Asn60 and Asn108. 2 disulfides stabilise this stretch: Cys263-Cys288 and Cys265-Cys281. The N-linked (GlcNAc...) asparagine glycan is linked to Asn284.

Belongs to the sarcoglycan beta/delta/gamma/zeta family. In terms of assembly, interacts with FLNC and DAG1. Cross-link to form 2 major subcomplexes: one consisting of SGCB, SGCD and SGCG and the other consisting of SGCB and SGCD. The association between SGCB and SGCG is particularly strong while SGCA is loosely associated with the other sarcoglycans. Post-translationally, glycosylated. In terms of processing, disulfide bonds are present. In terms of tissue distribution, most strongly expressed in skeletal and cardiac muscle. Also detected in smooth muscle. Weak expression in brain and lung.

The protein resides in the cell membrane. The protein localises to the sarcolemma. It is found in the cytoplasm. It localises to the cytoskeleton. Component of the sarcoglycan complex, a subcomplex of the dystrophin-glycoprotein complex which forms a link between the F-actin cytoskeleton and the extracellular matrix. The polypeptide is Delta-sarcoglycan (SGCD) (Homo sapiens (Human)).